Consider the following 159-residue polypeptide: Ribosomal RNA large subunit methyltransferase H (159 aa).

S-adenosyl-L-methionine contacts are provided by residues leucine 76, glycine 108, and phenylalanine 127 to leucine 132.

The protein belongs to the RNA methyltransferase RlmH family. In terms of assembly, homodimer.

It localises to the cytoplasm. The catalysed reaction is pseudouridine(1915) in 23S rRNA + S-adenosyl-L-methionine = N(3)-methylpseudouridine(1915) in 23S rRNA + S-adenosyl-L-homocysteine + H(+). In terms of biological role, specifically methylates the pseudouridine at position 1915 (m3Psi1915) in 23S rRNA. The protein is Ribosomal RNA large subunit methyltransferase H of Leuconostoc citreum (strain KM20).